Reading from the N-terminus, the 149-residue chain is Calmodulin (149 aa).

T2 is subject to N-acetylthreonine. 4 consecutive EF-hand domains span residues E8–N43, P44–E79, D81–K116, and L117–K149. Ca(2+)-binding residues include D21, D23, D25, T27, E32, D57, D59, N61, T63, E68, D94, D96, N98, and E105. Position 116 is an N6,N6,N6-trimethyllysine (K116). Ca(2+) contacts are provided by D130, D132, D134, Q136, and E141.

Belongs to the calmodulin family.

In terms of biological role, calmodulin mediates the control of a large number of enzymes, ion channels and other proteins by Ca(2+). Among the enzymes to be stimulated by the calmodulin-Ca(2+) complex are a number of protein kinases and phosphatases. In Halichondria okadai (Marine sponge), this protein is Calmodulin.